We begin with the raw amino-acid sequence, 1000 residues long: Bifunctional glutamine synthetase adenylyltransferase/adenylyl-removing enzyme (1000 aa).

The adenylyl removase stretch occupies residues 1 to 481 (MTAPGRRSST…LHEKLFYRPL (481 aa)). Positions 487-1000 (QLAPGEARLS…AVVDEQFYGA (514 aa)) are adenylyl transferase.

The protein belongs to the GlnE family. The cofactor is Mg(2+).

It carries out the reaction [glutamine synthetase]-O(4)-(5'-adenylyl)-L-tyrosine + phosphate = [glutamine synthetase]-L-tyrosine + ADP. It catalyses the reaction [glutamine synthetase]-L-tyrosine + ATP = [glutamine synthetase]-O(4)-(5'-adenylyl)-L-tyrosine + diphosphate. Involved in the regulation of glutamine synthetase GlnA, a key enzyme in the process to assimilate ammonia. When cellular nitrogen levels are high, the C-terminal adenylyl transferase (AT) inactivates GlnA by covalent transfer of an adenylyl group from ATP to specific tyrosine residue of GlnA, thus reducing its activity. Conversely, when nitrogen levels are low, the N-terminal adenylyl removase (AR) activates GlnA by removing the adenylyl group by phosphorolysis, increasing its activity. The regulatory region of GlnE binds the signal transduction protein PII (GlnB) which indicates the nitrogen status of the cell. This is Bifunctional glutamine synthetase adenylyltransferase/adenylyl-removing enzyme from Streptomyces avermitilis (strain ATCC 31267 / DSM 46492 / JCM 5070 / NBRC 14893 / NCIMB 12804 / NRRL 8165 / MA-4680).